A 602-amino-acid polypeptide reads, in one-letter code: Elongation factor 4 (602 aa).

Residues 7–189 form the tr-type G domain; the sequence is SRIRNFSIIA…SIVQQVPPPA (183 aa). Residues 19–24 and 136–139 each bind GTP; these read DHGKST and NKID.

The protein belongs to the TRAFAC class translation factor GTPase superfamily. Classic translation factor GTPase family. LepA subfamily.

It is found in the cell inner membrane. The enzyme catalyses GTP + H2O = GDP + phosphate + H(+). In terms of biological role, required for accurate and efficient protein synthesis under certain stress conditions. May act as a fidelity factor of the translation reaction, by catalyzing a one-codon backward translocation of tRNAs on improperly translocated ribosomes. Back-translocation proceeds from a post-translocation (POST) complex to a pre-translocation (PRE) complex, thus giving elongation factor G a second chance to translocate the tRNAs correctly. Binds to ribosomes in a GTP-dependent manner. This is Elongation factor 4 from Picosynechococcus sp. (strain ATCC 27264 / PCC 7002 / PR-6) (Agmenellum quadruplicatum).